A 179-amino-acid chain; its full sequence is Protein GrpE (179 aa).

It belongs to the GrpE family. In terms of assembly, homodimer.

It is found in the cytoplasm. Participates actively in the response to hyperosmotic and heat shock by preventing the aggregation of stress-denatured proteins, in association with DnaK and GrpE. It is the nucleotide exchange factor for DnaK and may function as a thermosensor. Unfolded proteins bind initially to DnaJ; upon interaction with the DnaJ-bound protein, DnaK hydrolyzes its bound ATP, resulting in the formation of a stable complex. GrpE releases ADP from DnaK; ATP binding to DnaK triggers the release of the substrate protein, thus completing the reaction cycle. Several rounds of ATP-dependent interactions between DnaJ, DnaK and GrpE are required for fully efficient folding. This is Protein GrpE from Rickettsia felis (strain ATCC VR-1525 / URRWXCal2) (Rickettsia azadi).